The sequence spans 446 residues: Phosphoglucosamine mutase (446 aa).

The active-site Phosphoserine intermediate is Ser-103. The Mg(2+) site is built by Ser-103, Asp-242, Asp-244, and Asp-246. Ser-103 is subject to Phosphoserine.

This sequence belongs to the phosphohexose mutase family. Mg(2+) serves as cofactor. Post-translationally, activated by phosphorylation.

The catalysed reaction is alpha-D-glucosamine 1-phosphate = D-glucosamine 6-phosphate. Its function is as follows. Catalyzes the conversion of glucosamine-6-phosphate to glucosamine-1-phosphate. The polypeptide is Phosphoglucosamine mutase (Vibrio vulnificus (strain CMCP6)).